Here is a 555-residue protein sequence, read N- to C-terminus: Synaptotagmin-14 (555 aa).

At 1 to 24 (MAIEGGERTCGVHELICIRKVSPE) the chain is on the extracellular side. A helical; Signal-anchor for type III membrane protein membrane pass occupies residues 25–47 (AVGFLSAVGVFIILMLLLFLYIN). Over 48–555 (KKFCFENVGG…VCRWHALLES (508 aa)) the chain is Cytoplasmic. 2 disordered regions span residues 157–179 (TPPL…HLSC) and 222–257 (GYEE…DPEP). 2 consecutive C2 domains span residues 260 to 379 (KYGT…SLPV) and 415 to 550 (SVPE…CRWH).

The protein belongs to the synaptotagmin family. Homodimer. Can also form heterodimers. In terms of tissue distribution, highly expressed in fetal and adult brain tissue.

It localises to the membrane. In terms of biological role, may be involved in the trafficking and exocytosis of secretory vesicles in non-neuronal tissues. Is Ca(2+)-independent. The sequence is that of Synaptotagmin-14 (SYT14) from Homo sapiens (Human).